The chain runs to 300 residues: Cation-efflux pump FieF (300 aa).

The next 6 membrane-spanning stretches (helical) occupy residues 12–32 (AAIA…FAWW), 39–59 (ILAA…NLLV), 82–102 (AALA…LTGI), 114–134 (PGVG…LVSF), 151–171 (MLHY…LALS), and 172–192 (WYGW…YILY). Residues Asp45 and Asp49 each contribute to the Zn(2+) site. The Zn(2+) site is built by His153 and Asp157.

This sequence belongs to the cation diffusion facilitator (CDF) transporter (TC 2.A.4) family. FieF subfamily. As to quaternary structure, homodimer.

Its subcellular location is the cell inner membrane. It catalyses the reaction Zn(2+)(in) + H(+)(out) = Zn(2+)(out) + H(+)(in). The catalysed reaction is Cd(2+)(in) + H(+)(out) = Cd(2+)(out) + H(+)(in). It carries out the reaction Fe(2+)(in) + H(+)(out) = Fe(2+)(out) + H(+)(in). Its function is as follows. Divalent metal cation transporter which exports Zn(2+), Cd(2+) and possibly Fe(2+). May be involved in zinc and iron detoxification by efflux. The chain is Cation-efflux pump FieF from Escherichia fergusonii (strain ATCC 35469 / DSM 13698 / CCUG 18766 / IAM 14443 / JCM 21226 / LMG 7866 / NBRC 102419 / NCTC 12128 / CDC 0568-73).